Here is a 442-residue protein sequence, read N- to C-terminus: 5-methylthioadenosine/S-adenosylhomocysteine deaminase (442 aa).

Zn(2+) is bound by residues His-70 and His-72. Substrate-binding residues include Glu-99 and His-191. His-218 lines the Zn(2+) pocket. Substrate contacts are provided by Glu-221 and Asp-306. Asp-306 serves as a coordination point for Zn(2+).

This sequence belongs to the metallo-dependent hydrolases superfamily. MTA/SAH deaminase family. Zn(2+) serves as cofactor.

The enzyme catalyses S-adenosyl-L-homocysteine + H2O + H(+) = S-inosyl-L-homocysteine + NH4(+). It catalyses the reaction S-methyl-5'-thioadenosine + H2O + H(+) = S-methyl-5'-thioinosine + NH4(+). In terms of biological role, catalyzes the deamination of 5-methylthioadenosine and S-adenosyl-L-homocysteine into 5-methylthioinosine and S-inosyl-L-homocysteine, respectively. Is also able to deaminate adenosine. In Nitratidesulfovibrio vulgaris (strain ATCC 29579 / DSM 644 / CCUG 34227 / NCIMB 8303 / VKM B-1760 / Hildenborough) (Desulfovibrio vulgaris), this protein is 5-methylthioadenosine/S-adenosylhomocysteine deaminase.